A 313-amino-acid polypeptide reads, in one-letter code: MFTPVRRRVRTAALALSAAAALVLGSTAASGASATPSPAPAPAPAPVKQGPTSVAYVEVNNNSMLNVGKYTLADGGGNAFDVAVIFAANINYDTGTKTAYLHFNENVQRVLDNAVTQIRPLQQQGIKVLLSVLGNHQGAGFANFPSQQAASAFAKQLSDAVAKYGLDGVDFDDEYAEYGNNGTAQPNDSSFVHLVTALRANMPDKIISLYNIGPAASRLSYGGVDVSDKFDYAWNPYYGTWQVPGIALPKAQLSPAAVEIGRTSRSTVADLARRTVDEGYGVYLTYNLDGGDRTADVSAFTRELYGSEAVRTP.

Positions 1–42 (MFTPVRRRVRTAALALSAAAALVLGSTAASGASATPSPAPAP) form a signal peptide, or 44. The GH18 domain maps to 51-307 (PTSVAYVEVN…SAFTRELYGS (257 aa)). E174 acts as the Proton donor in catalysis.

It belongs to the glycosyl hydrolase 18 family.

It carries out the reaction an N(4)-(oligosaccharide-(1-&gt;3)-[oligosaccharide-(1-&gt;6)]-beta-D-Man-(1-&gt;4)-beta-D-GlcNAc-(1-&gt;4)-alpha-D-GlcNAc)-L-asparaginyl-[protein] + H2O = an oligosaccharide-(1-&gt;3)-[oligosaccharide-(1-&gt;6)]-beta-D-Man-(1-&gt;4)-D-GlcNAc + N(4)-(N-acetyl-beta-D-glucosaminyl)-L-asparaginyl-[protein]. Its function is as follows. Cleaves asparagine-linked oligomannose and hybrid, but not complex, oligosaccharides from glycoproteins. This is Endo-beta-N-acetylglucosaminidase H from Streptomyces plicatus.